The following is a 396-amino-acid chain: Elongation factor Tu (396 aa).

The tr-type G domain maps to 10-206; sequence KPHCNIGTIG…AVDAYIPQPE (197 aa). The tract at residues 19–26 is G1; it reads GHVDHGKT. 19–26 lines the GTP pocket; sequence GHVDHGKT. T26 serves as a coordination point for Mg(2+). Residues 60 to 64 form a G2 region; it reads GITIS. The G3 stretch occupies residues 81-84; that stretch reads DCPG. GTP is bound by residues 81–85 and 136–139; these read DCPGH and NKCD. The interval 136 to 139 is G4; that stretch reads NKCD. The interval 174-176 is G5; the sequence is SAL.

It belongs to the TRAFAC class translation factor GTPase superfamily. Classic translation factor GTPase family. EF-Tu/EF-1A subfamily. In terms of assembly, monomer.

Its subcellular location is the cytoplasm. The catalysed reaction is GTP + H2O = GDP + phosphate + H(+). Its function is as follows. GTP hydrolase that promotes the GTP-dependent binding of aminoacyl-tRNA to the A-site of ribosomes during protein biosynthesis. In Nitrobacter hamburgensis (strain DSM 10229 / NCIMB 13809 / X14), this protein is Elongation factor Tu.